The following is a 651-amino-acid chain: Probable ATP-dependent helicase MJ0942 (651 aa).

The Helicase ATP-binding domain maps to 6–255; sequence YIKEKFPYPK…EIIEKYLTSR (250 aa). 41–48 is a binding site for ATP; sequence APTGVGKT. [4Fe-4S] cluster is bound by residues Cys-102, Cys-149, and Cys-154. The short motif at 195 to 198 is the DEAH box element; sequence DEAH. The Helicase C-terminal domain maps to 449–638; that stretch reads NLLKILEAIN…NYEVMSLDMA (190 aa).

This sequence belongs to the helicase family. DinG subfamily. Requires [4Fe-4S] cluster as cofactor.

The enzyme catalyses Couples ATP hydrolysis with the unwinding of duplex DNA at the replication fork by translocating in the 5'-3' direction. This creates two antiparallel DNA single strands (ssDNA). The leading ssDNA polymer is the template for DNA polymerase III holoenzyme which synthesizes a continuous strand.. It catalyses the reaction ATP + H2O = ADP + phosphate + H(+). Might be a 5'-3' DNA helicase. This Methanocaldococcus jannaschii (strain ATCC 43067 / DSM 2661 / JAL-1 / JCM 10045 / NBRC 100440) (Methanococcus jannaschii) protein is Probable ATP-dependent helicase MJ0942.